A 214-amino-acid polypeptide reads, in one-letter code: Ribosomal RNA small subunit methyltransferase G (214 aa).

Residues glycine 81, methionine 86, 132–133, and arginine 147 contribute to the S-adenosyl-L-methionine site; that span reads VE.

It belongs to the methyltransferase superfamily. RNA methyltransferase RsmG family.

It is found in the cytoplasm. It catalyses the reaction guanosine(527) in 16S rRNA + S-adenosyl-L-methionine = N(7)-methylguanosine(527) in 16S rRNA + S-adenosyl-L-homocysteine. Functionally, specifically methylates the N7 position of guanine in position 527 of 16S rRNA. This Pseudomonas paraeruginosa (strain DSM 24068 / PA7) (Pseudomonas aeruginosa (strain PA7)) protein is Ribosomal RNA small subunit methyltransferase G.